The following is a 217-amino-acid chain: Glycosylphosphatidylinositol anchor biosynthesis protein 11 (217 aa).

Asparagine 20 carries an N-linked (GlcNAc...) asparagine glycan. Helical transmembrane passes span 41-61, 66-86, 107-127, 139-159, 169-189, and 197-217; these read VYVR…LYWF, DFNL…YLIF, FITL…IVLF, WLLA…VFNC, YFIS…LDWD, and VPLI…GGYI.

This sequence belongs to the PIGF family.

Its subcellular location is the endoplasmic reticulum membrane. The protein operates within glycolipid biosynthesis; glycosylphosphatidylinositol-anchor biosynthesis. Functionally, acts in the GPI biosynthetic pathway between GlcNAc-PI synthesis and GPI transfer to protein. In Kluyveromyces lactis (strain ATCC 8585 / CBS 2359 / DSM 70799 / NBRC 1267 / NRRL Y-1140 / WM37) (Yeast), this protein is Glycosylphosphatidylinositol anchor biosynthesis protein 11 (GPI11).